A 144-amino-acid chain; its full sequence is Probable calcium-binding protein CML31 (144 aa).

EF-hand domains are found at residues 1–31 (MAEI…FSPQ), 32–67 (ITSE…NGGG), 72–107 (EEEV…LGEK), and 108–143 (HTME…NKES). Residues Asp-45, Asp-47, Asp-49, Gln-51, Glu-56, Asp-85, Asp-87, Asp-89, Lys-91, Glu-96, Asp-121, Asp-123, Asp-125, and Glu-132 each coordinate Ca(2+).

In terms of biological role, potential calcium sensor. The sequence is that of Probable calcium-binding protein CML31 (CML31) from Arabidopsis thaliana (Mouse-ear cress).